Reading from the N-terminus, the 690-residue chain is Serotransferrin-1 (690 aa).

The N-terminal stretch at 1 to 18 is a signal peptide; the sequence is MKLLLLSALLGCLATAYA. 2 Transferrin-like domains span residues 25–329 and 340–669; these read VKWC…SLKK and IKWC…SLRK. An intrachain disulfide couples Cys28 to Cys50. Positions 74 and 104 each coordinate Fe(3+). 3 disulfide bridges follow: Cys127–Cys207, Cys172–Cys186, and Cys235–Cys249. Hydrogencarbonate is bound by residues Thr129, Ser134, Gly136, and Trp137. Asn169 carries N-linked (GlcNAc...) asparagine glycosylation. Fe(3+) is bound at residue Tyr201. Position 257 (His257) interacts with Fe(3+). Intrachain disulfides connect Cys343/Cys379 and Cys353/Cys370. 2 residues coordinate Fe(3+): Asp394 and Tyr428. Cystine bridges form between Cys404–Cys681, Cys419–Cys642, Cys451–Cys529, Cys475–Cys670, Cys485–Cys499, Cys496–Cys512, and Cys569–Cys583. Residues Thr453, Arg457, Ala459, and Gly460 each contribute to the hydrogencarbonate site. Tyr523 contacts Fe(3+). A Fe(3+)-binding site is contributed by His591.

The protein belongs to the transferrin family. As to quaternary structure, monomer. Abundant in liver and serum with smaller amounts found in the stomach and kidney.

It localises to the secreted. In terms of biological role, transferrins are iron binding transport proteins which can bind two Fe(3+) ions in association with the binding of an anion, usually bicarbonate. It is responsible for the transport of iron from sites of absorption and heme degradation to those of storage and utilization. Serum transferrin may also have a further role in stimulating cell proliferation. This Salmo salar (Atlantic salmon) protein is Serotransferrin-1 (tf1).